The following is a 419-amino-acid chain: UDP-N-acetylglucosamine 1-carboxyvinyltransferase (419 aa).

22–23 contributes to the phosphoenolpyruvate binding site; sequence KN. Arg93 lines the UDP-N-acetyl-alpha-D-glucosamine pocket. The active-site Proton donor is Cys117. A 2-(S-cysteinyl)pyruvic acid O-phosphothioketal modification is found at Cys117. UDP-N-acetyl-alpha-D-glucosamine contacts are provided by Asp307 and Ile329.

This sequence belongs to the EPSP synthase family. MurA subfamily.

Its subcellular location is the cytoplasm. The catalysed reaction is phosphoenolpyruvate + UDP-N-acetyl-alpha-D-glucosamine = UDP-N-acetyl-3-O-(1-carboxyvinyl)-alpha-D-glucosamine + phosphate. Its pathway is cell wall biogenesis; peptidoglycan biosynthesis. In terms of biological role, cell wall formation. Adds enolpyruvyl to UDP-N-acetylglucosamine. The protein is UDP-N-acetylglucosamine 1-carboxyvinyltransferase of Shewanella baltica (strain OS195).